A 396-amino-acid polypeptide reads, in one-letter code: Phosphoglycerate kinase (396 aa).

Substrate contacts are provided by residues 23–25 (DFN), Arg-38, 61–64 (HMGK), Arg-122, and Arg-155. ATP contacts are provided by residues Lys-206, Gly-296, Glu-327, and 353–356 (GGDS).

This sequence belongs to the phosphoglycerate kinase family. In terms of assembly, monomer.

The protein resides in the cytoplasm. The enzyme catalyses (2R)-3-phosphoglycerate + ATP = (2R)-3-phospho-glyceroyl phosphate + ADP. It participates in carbohydrate degradation; glycolysis; pyruvate from D-glyceraldehyde 3-phosphate: step 2/5. This Clostridium botulinum (strain Eklund 17B / Type B) protein is Phosphoglycerate kinase.